Consider the following 369-residue polypeptide: Dual specificity protein phosphatase 1-A (369 aa).

Positions 21–138 constitute a Rhodanese domain; sequence RAHKCLILDC…FSAQCPEFCT (118 aa). Residue threonine 168 is modified to Phosphothreonine; by MAPK1. In terms of domain architecture, Tyrosine-protein phosphatase spans 175-316; sequence GPVEILPFLY…LLQFESQVLA (142 aa). Catalysis depends on cysteine 260, which acts as the Phosphocysteine intermediate.

The protein belongs to the protein-tyrosine phosphatase family. Non-receptor class dual specificity subfamily. Phosphorylated by MAPK1/ERK2 at Thr-168 and at one or more serine residues in a progesterone-dependent manner. Phosphorylation reduces its rate of degradation but does not seem to affect phosphatase activity. In terms of tissue distribution, expressed in XIK-2 kidney cells.

It is found in the nucleus. It catalyses the reaction O-phospho-L-seryl-[protein] + H2O = L-seryl-[protein] + phosphate. The catalysed reaction is O-phospho-L-threonyl-[protein] + H2O = L-threonyl-[protein] + phosphate. The enzyme catalyses O-phospho-L-tyrosyl-[protein] + H2O = L-tyrosyl-[protein] + phosphate. Dual specificity phosphatase that dephosphorylates MAP kinase MAPK1/ERK2 on both 'Thr-188' and 'Tyr-190', regulating its activity during the meiotic cell cycle. In Xenopus laevis (African clawed frog), this protein is Dual specificity protein phosphatase 1-A.